The chain runs to 314 residues: tRNA-cytidine(32) 2-sulfurtransferase (314 aa).

The PP-loop motif motif lies at 49–54 (SGGKDS). Residues Cys124, Cys127, and Cys215 each coordinate [4Fe-4S] cluster.

Belongs to the TtcA family. As to quaternary structure, homodimer. The cofactor is Mg(2+). [4Fe-4S] cluster is required as a cofactor.

The protein resides in the cytoplasm. The catalysed reaction is cytidine(32) in tRNA + S-sulfanyl-L-cysteinyl-[cysteine desulfurase] + AH2 + ATP = 2-thiocytidine(32) in tRNA + L-cysteinyl-[cysteine desulfurase] + A + AMP + diphosphate + H(+). It participates in tRNA modification. In terms of biological role, catalyzes the ATP-dependent 2-thiolation of cytidine in position 32 of tRNA, to form 2-thiocytidine (s(2)C32). The sulfur atoms are provided by the cysteine/cysteine desulfurase (IscS) system. This is tRNA-cytidine(32) 2-sulfurtransferase from Histophilus somni (strain 129Pt) (Haemophilus somnus).